The following is a 656-amino-acid chain: DNA ligase (656 aa).

Residues 32 to 36 and 81 to 82 contribute to the NAD(+) site; these read DAVYD and SL. The active-site N6-AMP-lysine intermediate is Lys-112. NAD(+)-binding residues include Arg-133, Glu-167, and Lys-306. Zn(2+) is bound by residues Cys-400, Cys-403, Cys-416, and Cys-421. One can recognise a BRCT domain in the interval 577–656; sequence KSSSVFNNKT…ELLKRLKELD (80 aa).

Belongs to the NAD-dependent DNA ligase family. LigA subfamily. It depends on Mg(2+) as a cofactor. Mn(2+) is required as a cofactor.

It catalyses the reaction NAD(+) + (deoxyribonucleotide)n-3'-hydroxyl + 5'-phospho-(deoxyribonucleotide)m = (deoxyribonucleotide)n+m + AMP + beta-nicotinamide D-nucleotide.. DNA ligase that catalyzes the formation of phosphodiester linkages between 5'-phosphoryl and 3'-hydroxyl groups in double-stranded DNA using NAD as a coenzyme and as the energy source for the reaction. It is essential for DNA replication and repair of damaged DNA. The sequence is that of DNA ligase from Helicobacter pylori (strain P12).